A 65-amino-acid polypeptide reads, in one-letter code: MVAKQRIRMANEKHSKNITQRGNVAKTLRPQEEKYPVGPWLLALFVFVVCGSAIFQIIQSIRMGM.

The helical transmembrane segment at 38–58 (GPWLLALFVFVVCGSAIFQII) threads the bilayer.

Belongs to the RAMP4 family. As to quaternary structure, interacts with SEC61B, SEC61A1 and the SEC61 complex. Interacts with CANX.

It is found in the membrane. The protein resides in the endoplasmic reticulum membrane. Interacts with target proteins during their translocation into the lumen of the endoplasmic reticulum. Protects unfolded target proteins against degradation during ER stress. May facilitate glycosylation of target proteins after termination of ER stress. May modulate the use of N-glycosylation sites on target proteins. The polypeptide is Stress-associated endoplasmic reticulum protein 2 (SERP2) (Bos taurus (Bovine)).